The chain runs to 122 residues: Large ribosomal subunit protein bL12 (122 aa).

Belongs to the bacterial ribosomal protein bL12 family. As to quaternary structure, homodimer. Part of the ribosomal stalk of the 50S ribosomal subunit. Forms a multimeric L10(L12)X complex, where L10 forms an elongated spine to which 2 to 4 L12 dimers bind in a sequential fashion. Binds GTP-bound translation factors.

Forms part of the ribosomal stalk which helps the ribosome interact with GTP-bound translation factors. Is thus essential for accurate translation. This Aliivibrio fischeri (strain ATCC 700601 / ES114) (Vibrio fischeri) protein is Large ribosomal subunit protein bL12.